The primary structure comprises 294 residues: Cytidine deaminase (294 aa).

2 consecutive CMP/dCMP-type deaminase domains span residues 48-168 (DEDA…FGPK) and 186-294 (LTGD…VLLG). Residue 89 to 91 (NME) participates in substrate binding. His-102 lines the Zn(2+) pocket. Catalysis depends on Glu-104, which acts as the Proton donor. Cys-129 and Cys-132 together coordinate Zn(2+).

The protein belongs to the cytidine and deoxycytidylate deaminase family. As to quaternary structure, homodimer. The cofactor is Zn(2+).

It carries out the reaction cytidine + H2O + H(+) = uridine + NH4(+). The enzyme catalyses 2'-deoxycytidine + H2O + H(+) = 2'-deoxyuridine + NH4(+). In terms of biological role, this enzyme scavenges exogenous and endogenous cytidine and 2'-deoxycytidine for UMP synthesis. The protein is Cytidine deaminase of Salmonella paratyphi A (strain ATCC 9150 / SARB42).